The chain runs to 428 residues: Adenylosuccinate synthetase (428 aa).

Residues 12–18 (GDEGKGK) and 40–42 (GHT) each bind GTP. Catalysis depends on aspartate 13, which acts as the Proton acceptor. 2 residues coordinate Mg(2+): aspartate 13 and glycine 40. Residues 13-16 (DEGK), 38-41 (NAGH), threonine 129, arginine 143, glutamine 224, threonine 239, and arginine 303 contribute to the IMP site. Histidine 41 acts as the Proton donor in catalysis. 299–305 (VTTGRIR) is a binding site for substrate. GTP contacts are provided by residues arginine 305, 331–333 (KVD), and 410–412 (AYG).

This sequence belongs to the adenylosuccinate synthetase family. Homodimer. It depends on Mg(2+) as a cofactor.

The protein resides in the cytoplasm. The catalysed reaction is IMP + L-aspartate + GTP = N(6)-(1,2-dicarboxyethyl)-AMP + GDP + phosphate + 2 H(+). Its pathway is purine metabolism; AMP biosynthesis via de novo pathway; AMP from IMP: step 1/2. In terms of biological role, plays an important role in the de novo pathway of purine nucleotide biosynthesis. Catalyzes the first committed step in the biosynthesis of AMP from IMP. The polypeptide is Adenylosuccinate synthetase (Francisella tularensis subsp. tularensis (strain FSC 198)).